A 1085-amino-acid chain; its full sequence is Carbamoyl phosphate synthase large chain (1085 aa).

Positions 1-399 (MPKRTDISNI…ALQKALCSLE (399 aa)) are carboxyphosphate synthetic domain. Residues Arg-127, Arg-167, Gly-174, Glu-206, Leu-208, Glu-213, Gly-239, Val-240, His-241, Gln-283, and Glu-297 each contribute to the ATP site. Residues 131–326 (KEAMLKIGMD…IAKVATMLAV (196 aa)) form the ATP-grasp 1 domain. Positions 283, 297, and 299 each coordinate Mg(2+). Positions 283, 297, and 299 each coordinate Mn(2+). The segment at 400 to 551 (NNWLGFESLS…YAPNPLPPIG (152 aa)) is oligomerization domain. The tract at residues 552–951 (NKQEKQEKKI…AFFKAQTACF (400 aa)) is carbamoyl phosphate synthetic domain. The ATP-grasp 2 domain maps to 678–871 (SLFLKELDIK…LAKVATRVMV (194 aa)). ATP-binding residues include Arg-714, Lys-756, Leu-758, Glu-763, Gly-788, Ile-789, His-790, Ser-791, Gln-830, and Glu-842. Gln-830, Glu-842, and Asn-844 together coordinate Mg(2+). Mn(2+)-binding residues include Gln-830, Glu-842, and Asn-844. Residues 952–1085 (NPIKNKGLIF…ELLALQDYLK (134 aa)) enclose the MGS-like domain. Residues 952–1085 (NPIKNKGLIF…ELLALQDYLK (134 aa)) are allosteric domain.

This sequence belongs to the CarB family. As to quaternary structure, composed of two chains; the small (or glutamine) chain promotes the hydrolysis of glutamine to ammonia, which is used by the large (or ammonia) chain to synthesize carbamoyl phosphate. Tetramer of heterodimers (alpha,beta)4. The cofactor is Mg(2+). It depends on Mn(2+) as a cofactor.

The catalysed reaction is hydrogencarbonate + L-glutamine + 2 ATP + H2O = carbamoyl phosphate + L-glutamate + 2 ADP + phosphate + 2 H(+). The enzyme catalyses hydrogencarbonate + NH4(+) + 2 ATP = carbamoyl phosphate + 2 ADP + phosphate + 2 H(+). The protein operates within amino-acid biosynthesis; L-arginine biosynthesis; carbamoyl phosphate from bicarbonate: step 1/1. It participates in pyrimidine metabolism; UMP biosynthesis via de novo pathway; (S)-dihydroorotate from bicarbonate: step 1/3. Large subunit of the glutamine-dependent carbamoyl phosphate synthetase (CPSase). CPSase catalyzes the formation of carbamoyl phosphate from the ammonia moiety of glutamine, carbonate, and phosphate donated by ATP, constituting the first step of 2 biosynthetic pathways, one leading to arginine and/or urea and the other to pyrimidine nucleotides. The large subunit (synthetase) binds the substrates ammonia (free or transferred from glutamine from the small subunit), hydrogencarbonate and ATP and carries out an ATP-coupled ligase reaction, activating hydrogencarbonate by forming carboxy phosphate which reacts with ammonia to form carbamoyl phosphate. The sequence is that of Carbamoyl phosphate synthase large chain from Helicobacter pylori (strain J99 / ATCC 700824) (Campylobacter pylori J99).